The primary structure comprises 592 residues: Testis-specific serine kinase substrate (592 aa).

A Phosphoserine modification is found at serine 217. The segment at 232–308 (QDETPRRQEA…VPAGWGMGPR (77 aa)) is disordered. Residues 234 to 264 (ETPRRQEAELQEPEEKQEPEEKQEPEEKQKP) show a composition bias toward basic and acidic residues. Residues 269–281 (SWNSLGPAATSQG) are compositionally biased toward polar residues. A Phosphoserine; by TSSK1 and TSSK2 modification is found at serine 288. A Phosphoserine modification is found at serine 316. The disordered stretch occupies residues 566 to 592 (LEGSTGTMGGGSSAGTPPKQGGSAPEQ).

Phosphorylated on serine residue(s) by STK22A/TSSK1 and STK22B/TSSK2. Highly expressed in testis. Expressed at low levels in prostate, female breast, placenta, ovary and thymus.

The protein resides in the cytoplasm. It localises to the cytoskeleton. The protein localises to the microtubule organizing center. It is found in the centrosome. Its subcellular location is the centriole. Its function is as follows. May play a role in testicular physiology, most probably in the process of spermatogenesis or spermatid development. The polypeptide is Testis-specific serine kinase substrate (TSKS) (Homo sapiens (Human)).